The following is a 131-amino-acid chain: Histone H2B.1 (131 aa).

Positions Met1 to Pro19 are enriched in basic and acidic residues. Positions Met1–Lys38 are disordered. An N6-acetyllysine; alternate mark is found at Lys7 and Lys8. Residues Lys7 and Lys8 each participate in a glycyl lysine isopeptide (Lys-Gly) (interchain with G-Cter in SUMO); alternate cross-link. The residue at position 11 (Ser11) is a Phosphoserine. Position 12 is an N6-acetyllysine (Lys12). Residues Lys17, Lys18, Lys22, and Lys23 each carry the N6-acetyllysine; alternate modification. Glycyl lysine isopeptide (Lys-Gly) (interchain with G-Cter in SUMO); alternate cross-links involve residues Lys17 and Lys18. Residue Lys22 is modified to N6-butyryllysine; alternate. Lys23 is subject to N6-methyllysine; alternate. Lys35 is subject to N6-succinyllysine. Position 38 is an N6,N6-dimethyllysine (Lys38). Residue Lys47 is modified to N6-succinyllysine. A Glycyl lysine isopeptide (Lys-Gly) (interchain with G-Cter in ubiquitin) cross-link involves residue Lys124.

Belongs to the histone H2B family. The nucleosome is a histone octamer containing two molecules each of H2A, H2B, H3 and H4 assembled in one H3-H4 heterotetramer and two H2A-H2B heterodimers. The octamer wraps approximately 147 bp of DNA. Post-translationally, monoubiquitinated by the RAD6/UBC2-BRE1 complex to form H2BK123ub1. H2BK123ub1 gives a specific tag for epigenetic transcriptional activation and is also prerequisite for H3K4me and H3K79me formation. H2BK123ub1 also modulates the formation of double-strand breaks during meiosis and is a prerequisite for DNA-damage checkpoint activation. Deubiquitination is performed by UBP8 in presence of SGF11. In terms of processing, phosphorylated by STE20 to form H2BS10ph during progression through meiotic prophase. May be correlated with chromosome condensation. H2BS10ph is also formed after H(2)O(2) treatment, and is a step leading to apoptosis. Acetylated by GCN5, a component of the SAGA complex, to form H2BK11ac and H2BK16ac. H2BK16ac can also be formed by ESA1, a component of the NuA4 histone acetyltransferase (HAT) complex. Acetylation of N-terminal lysines and particularly formation of H2BK11acK16ac has a positive effect on transcription. Post-translationally, sumoylation to form H2BK6su or H2BK7su, and probably also H2BK16su or H2BK17su, occurs preferentially near the telomeres and represses gene transcription.

The protein localises to the nucleus. It localises to the chromosome. Its function is as follows. Core component of nucleosome. Nucleosomes wrap and compact DNA into chromatin, limiting DNA accessibility to the cellular machineries which require DNA as a template. Histones thereby play a central role in transcription regulation, DNA repair, DNA replication and chromosomal stability. DNA accessibility is regulated via a complex set of post-translational modifications of histones, also called histone code, and nucleosome remodeling. In Saccharomyces cerevisiae (strain ATCC 204508 / S288c) (Baker's yeast), this protein is Histone H2B.1 (HTB1).